The chain runs to 255 residues: 20 kDa chaperonin, chloroplastic (255 aa).

The N-terminal 53 residues, 1-53 (MAATHLTSTSSLTINTLPSFEGLRSASGISKINVSVAYPSFTSRSFRGLVVRA), are a transit peptide targeting the chloroplast. Cpn-10 domain regions lie at residues 54 to 156 (ASIT…ILET) and 157 to 255 (DDVK…AVLS).

Belongs to the GroES chaperonin family. Forms stable complexes with CPN60 in the presence of ATP.

The protein localises to the plastid. It is found in the chloroplast. Its function is as follows. Seems to function only as a co-chaperone, along with cpn60, and in certain cases is essential for the discharge of biologically active proteins from cpn60. In Spinacia oleracea (Spinach), this protein is 20 kDa chaperonin, chloroplastic (CPN21).